We begin with the raw amino-acid sequence, 165 residues long: Protein NKG7 (165 aa).

A run of 4 helical transmembrane segments spans residues 9–29 (LFAG…DFWI), 61–81 (FCIL…LSCI), 92–112 (LVST…MAVY), and 133–153 (FYLG…SLGA).

It belongs to the PMP-22/EMP/MP20 family. Predominantly expressed by leukocytes with cytotoxic activity such as CD8(+) T-cells and natural killer cells.

It is found in the cell membrane. Its subcellular location is the cytolytic granule membrane. Regulates cytotoxic granule exocytosis in effector lymphocytes, thus acting as a critical mediator of inflammation in a broad range of infectious and non-infectious diseases. Essential for cytotoxic degranulation of natural killer (NK) cells and CD8(+) T-cells and for the activation of CD4(+) T-cells following infection. Plays a critical role in CD8(+) T-cell and NK cell-mediated cytolysis of target cells and contributes to the cytolytic activity via the perforin/granzyme pathway by enhancing exocytosis of LAMP1-carrying lytic granules. Contributes to NK cell-mediated control of cancer metastasis. The chain is Protein NKG7 (Nkg7) from Mus musculus (Mouse).